Consider the following 903-residue polypeptide: Dynamin-like GTPase msp1, mitochondrial (903 aa).

The N-terminal 78 residues, 1–78 (MGISWFLSRF…RFFSFSSISR (78 aa)), are a transit peptide targeting the mitochondrion. A helical membrane pass occupies residues 86-103 (LPVAGFSLVAGGAAYIGA). Positions 167–188 (VLQAERAKEHRSNSNDKQKSSD) are enriched in basic and acidic residues. The disordered stretch occupies residues 167–198 (VLQAERAKEHRSNSNDKQKSSDNDEDPNDTTV). A helical membrane pass occupies residues 198–214 (VGIGAALAASILSVDSV). Residues 260 to 531 (AVTLPSIVVI…LEYTMSKNLQ (272 aa)) form the Dynamin-type G domain. Residues 270 to 277 (GSQSSGKS) form a G1 motif region. Ser273, Ser274, Gly275, Lys276, Ser277, Ser278, and Gly292 together coordinate GTP. A Mg(2+)-binding site is contributed by Ser277. Positions 296–298 (VTR) are G2 motif. Positions 297 and 370 each coordinate Mg(2+). Positions 370–373 (DLPG) are G3 motif. The tract at residues 438–441 (TKMD) is G4 motif. The GTP site is built by Lys439, Asp441, and Ser468. Positions 467–470 (ISRI) are G5 motif. Residues 691 to 805 (ATSEQVENCV…VLKSRACKHK (115 aa)) are paddle region. A disulfide bond links Cys802 and Cys811. The 94-residue stretch at 805–898 (KEAKYTCPEI…KINSLVILEQ (94 aa)) folds into the GED domain.

It belongs to the TRAFAC class dynamin-like GTPase superfamily. Dynamin/Fzo/YdjA family. As to quaternary structure, homooligomer. Interacts with cdr1. In terms of processing, cleavage of the transit peptide by mitochondrial processing protease (MPP) produces a long integral membrane form of msp1 (l-msp1). Further processing by a rhomboid protease after the transmembrane regions produces a short peripheral membrane form of msp1 (s-msp1). Both isoforms are required for full activity.

The protein localises to the mitochondrion inner membrane. Its subcellular location is the mitochondrion intermembrane space. The enzyme catalyses GTP + H2O = GDP + phosphate + H(+). In terms of biological role, dynamin-related GTPase that is essential for normal mitochondrial morphology by mediating fusion of the mitochondrial inner membranes and maintaining respiratory chain function. Exists in two forms: the transmembrane, long form (Dynamin-like GTPase msp1, long form; l-msp1), which is tethered to the inner mitochondrial membrane, and the short soluble form (Dynamin-like GTPase msp1, short form; s-msp1), which results from proteolytic cleavage and localizes in the intermembrane space. Both forms (l-msp1 and s-msp1) cooperate to catalyze the fusion of the mitochondrial inner membrane. Its role in mitochondrial morphology is required for mitochondrial genome maintenance. Functionally, constitutes the transmembrane long form (l-msp1) that plays a central role in mitochondrial inner membrane fusion. L-msp1 and the soluble short form (s-msp1) form higher-order helical assemblies that coordinate the fusion of mitochondrial inner membranes. Inner membrane-anchored l-msp1 molecules initiate membrane remodeling by recruiting soluble s-msp1 to rapidly polymerize into a flexible cylindrical scaffold encaging the mitochondrial inner membrane. Once at the membrane surface, the formation of s-msp1 helices induce bilayer curvature. Msp1 dimerization through the paddle region, which inserts into cardiolipin-containing membrane, promotes GTP hydrolysis and the helical assembly of a flexible msp1 lattice on the membrane, which drives membrane curvature and mitochondrial fusion. Constitutes the soluble short form (s-msp1) generated by cleavage, which plays a central role in mitochondrial inner membrane fusion. The transmembrane long form (l-msp1) and the s-msp1 form higher-order helical assemblies that coordinate the fusion of mitochondrial inner membranes. Inner membrane-anchored l-msp1 molecules initiate membrane remodeling by recruiting soluble s-msp1 to rapidly polymerize into a flexible cylindrical scaffold encaging the mitochondrial inner membrane. Once at the membrane surface, the formation of s-msp1 helices induce bilayer curvature. Msp1 dimerization through the paddle region, which inserts into cardiolipin-containing membrane, promotes GTP hydrolysis and the helical assembly of a flexible msp1 lattice on the membrane, which drives membrane curvature and mitochondrial fusion. This chain is Dynamin-like GTPase msp1, mitochondrial, found in Schizosaccharomyces pombe (strain 972 / ATCC 24843) (Fission yeast).